A 538-amino-acid polypeptide reads, in one-letter code: NADH-quinone oxidoreductase subunit N (538 aa).

The next 14 membrane-spanning stretches (helical) occupy residues 28 to 48, 57 to 77, 94 to 114, 147 to 167, 170 to 190, 206 to 226, 249 to 269, 288 to 308, 315 to 335, 343 to 363, 380 to 400, 424 to 444, 458 to 478, and 503 to 523; these read LAPVFVLMAGACVAVLVEAFV, QIIVTVATLVVAIASTLTTIA, PTLATWVILLATGLGTVVLFA, HTEVYPLLMFAALGMMCFAAA, LIMMFVALEIFSLPLYLLCGM, FLLGALSSALFLYGIVLLYGC, IVAGMILVAVGLLFKIGAVPF, MAVATKLVALVGLMRVLYVGL, WQIVLAVVAVASMGVGAIVGL, LLAYSAIAHAGFVLVGVVGAW, VLVYMTAYGLASIGFWLLILM, IGVLVVIFVLSFAGIPLTAGF, GYAWLVLIGVLFSLVAAAFYL, and IAGWITLIVCAVFTIVMGVAP.

Belongs to the complex I subunit 2 family. NDH-1 is composed of 14 different subunits. Subunits NuoA, H, J, K, L, M, N constitute the membrane sector of the complex.

The protein localises to the cell membrane. It carries out the reaction a quinone + NADH + 5 H(+)(in) = a quinol + NAD(+) + 4 H(+)(out). Functionally, NDH-1 shuttles electrons from NADH, via FMN and iron-sulfur (Fe-S) centers, to quinones in the respiratory chain. The immediate electron acceptor for the enzyme in this species is believed to be a menaquinone. Couples the redox reaction to proton translocation (for every two electrons transferred, four hydrogen ions are translocated across the cytoplasmic membrane), and thus conserves the redox energy in a proton gradient. The polypeptide is NADH-quinone oxidoreductase subunit N (Cutibacterium acnes (strain DSM 16379 / KPA171202) (Propionibacterium acnes)).